A 420-amino-acid polypeptide reads, in one-letter code: MTNVLIEDLKWRGLIYQQTDEQGIEDLLNKEQVTLYCGADPTADSLHIGHLLPFLTLRRFQEHGHRPIVLIGGGTGMIGDPSGKSEERVLQTEEQVDKNIEGISKQMHNIFEFGTDHGAVLVNNRDWLGQISLISFLRDYGKHVGVNYMLGKDSIQSRLEHGISYTEFTYTILQAIDFGHLNRELNCKIQVGGSDQWGNITSGIELMRRMYGQTDAYGLTIPLVTKSDGKKFGKSESGAVWLDAEKTSPYEFYQFWINQSDEDVIKFLKYFTFLGKEEIDRLEQSKNEAPHLREAQKTLAEEVTKFIHGEDALNDAIRISQALFSGDLKSLSAKELKDGFKDVPQVTLSNDTTNIVEVLIETGISPSKRQAREDVNNGAIYINGERQQDVNYALAPEDKIDGEFTIIRRGKKKYFMVNYQ.

An L-tyrosine-binding site is contributed by Tyr36. The 'HIGH' region signature appears at Pro41–His50. 2 residues coordinate L-tyrosine: Tyr170 and Gln174. The short motif at Lys231–Ser235 is the 'KMSKS' region element. Position 234 (Lys234) interacts with ATP. The S4 RNA-binding domain occupies Thr353–Gln420.

The protein belongs to the class-I aminoacyl-tRNA synthetase family. TyrS type 1 subfamily. Homodimer.

It localises to the cytoplasm. The catalysed reaction is tRNA(Tyr) + L-tyrosine + ATP = L-tyrosyl-tRNA(Tyr) + AMP + diphosphate + H(+). Functionally, catalyzes the attachment of tyrosine to tRNA(Tyr) in a two-step reaction: tyrosine is first activated by ATP to form Tyr-AMP and then transferred to the acceptor end of tRNA(Tyr). This Staphylococcus aureus (strain bovine RF122 / ET3-1) protein is Tyrosine--tRNA ligase.